The following is a 119-amino-acid chain: Large ribosomal subunit protein bL20 (119 aa).

It belongs to the bacterial ribosomal protein bL20 family.

Its function is as follows. Binds directly to 23S ribosomal RNA and is necessary for the in vitro assembly process of the 50S ribosomal subunit. It is not involved in the protein synthesizing functions of that subunit. This chain is Large ribosomal subunit protein bL20, found in Methylocella silvestris (strain DSM 15510 / CIP 108128 / LMG 27833 / NCIMB 13906 / BL2).